Here is a 570-residue protein sequence, read N- to C-terminus: Formate--tetrahydrofolate ligase (570 aa).

ATP is bound at residue 65–72; the sequence is TPFGEGKT.

It belongs to the formate--tetrahydrofolate ligase family.

It catalyses the reaction (6S)-5,6,7,8-tetrahydrofolate + formate + ATP = (6R)-10-formyltetrahydrofolate + ADP + phosphate. It participates in one-carbon metabolism; tetrahydrofolate interconversion. This chain is Formate--tetrahydrofolate ligase, found in Shewanella halifaxensis (strain HAW-EB4).